The primary structure comprises 290 residues: Expansin-A26 (290 aa).

A signal peptide spans 1-29 (MDTTTTMAPLPLLTTTSLLLFFFLASSFA). The interval 45-67 (DGGGDGEGGGGGDGEGGGGGGGA) is disordered. The Expansin-like EG45 domain maps to 101–196 (GGACGYKDAD…RKVACVRQGG (96 aa)). In terms of domain architecture, Expansin-like CBD spans 206-286 (SYNMVMVKNV…DWTYDNTYQA (81 aa)). A glycan (N-linked (GlcNAc...) asparagine) is linked at N250.

This sequence belongs to the expansin family. Expansin A subfamily. As to expression, expressed in flowers.

The protein resides in the secreted. Its subcellular location is the cell wall. It localises to the membrane. Functionally, may cause loosening and extension of plant cell walls by disrupting non-covalent bonding between cellulose microfibrils and matrix glucans. No enzymatic activity has been found. May be required for rapid internodal elongation in deepwater rice during submergence. This is Expansin-A26 (EXPA26) from Oryza sativa subsp. japonica (Rice).